The chain runs to 246 residues: NH(3)-dependent NAD(+) synthetase (246 aa).

29–36 (GLSGGIDS) is a binding site for ATP. Asp-35 serves as a coordination point for Mg(2+). Arg-110 contributes to the deamido-NAD(+) binding site. Position 130 (Thr-130) interacts with ATP. Glu-135 is a binding site for Mg(2+). ATP is bound by residues Lys-159 and Ser-181.

Belongs to the NAD synthetase family. Homodimer.

It carries out the reaction deamido-NAD(+) + NH4(+) + ATP = AMP + diphosphate + NAD(+) + H(+). It functions in the pathway cofactor biosynthesis; NAD(+) biosynthesis; NAD(+) from deamido-NAD(+) (ammonia route): step 1/1. In terms of biological role, catalyzes the ATP-dependent amidation of deamido-NAD to form NAD. Uses ammonia as a nitrogen source. The protein is NH(3)-dependent NAD(+) synthetase of Campylobacter jejuni subsp. jejuni serotype O:6 (strain 81116 / NCTC 11828).